We begin with the raw amino-acid sequence, 333 residues long: Ribosomal RNA small subunit methyltransferase C (333 aa).

It belongs to the methyltransferase superfamily. RsmC family. As to quaternary structure, monomer.

It is found in the cytoplasm. It catalyses the reaction guanosine(1207) in 16S rRNA + S-adenosyl-L-methionine = N(2)-methylguanosine(1207) in 16S rRNA + S-adenosyl-L-homocysteine + H(+). Its function is as follows. Specifically methylates the guanine in position 1207 of 16S rRNA in the 30S particle. The protein is Ribosomal RNA small subunit methyltransferase C of Chromohalobacter salexigens (strain ATCC BAA-138 / DSM 3043 / CIP 106854 / NCIMB 13768 / 1H11).